A 180-amino-acid polypeptide reads, in one-letter code: Urease accessory protein UreE (180 aa).

Positions 71 to 90 (AAPSGAGHGDGEQDGTGAPG) are disordered.

Belongs to the UreE family.

Its subcellular location is the cytoplasm. Its function is as follows. Involved in urease metallocenter assembly. Binds nickel. Probably functions as a nickel donor during metallocenter assembly. The polypeptide is Urease accessory protein UreE (Kocuria rhizophila (strain ATCC 9341 / DSM 348 / NBRC 103217 / DC2201)).